The primary structure comprises 473 residues: Serine palmitoyltransferase 1 (473 aa).

Residues 1 to 15 lie on the Lumenal side of the membrane; it reads MATATEQWVLVEMVQ. Positions 1 to 66 are interaction with SPTLC2; the sequence is MATATEQWVL…KEELIEEWQP (66 aa). The chain crosses the membrane as a helical span at residues 16–36; the sequence is ALYEAPAYHLILEGILILWII. Topologically, residues 37 to 473 are cytoplasmic; the sequence is RLLFSKTYKL…IKEVAQAVLL (437 aa). Phosphotyrosine; by ABL is present on Tyr-164.

This sequence belongs to the class-II pyridoxal-phosphate-dependent aminotransferase family. Component of the serine palmitoyltransferase (SPT) complex, which is also composed of SPTLC2 or SPTLC3 and SPTSSA or SPTSSB. The heterodimer consisting of SPTLC1 and SPTLC2/SPTLC3 forms the catalytic core of the enzyme, while SPTSSA or SPTSSB subunits determine substrate specificity. SPT also interacts with ORMDL proteins, especially ORMDL3, which negatively regulate SPT activity in the presence of ceramides. Forms dimers of heterodimers with SPTLC2. Interacts with RTN4 (isoform B). The cofactor is pyridoxal 5'-phosphate. Phosphorylation at Tyr-164 inhibits activity and promotes cell survival. Widely expressed. Not detected in small intestine.

The protein localises to the endoplasmic reticulum membrane. The enzyme catalyses L-serine + hexadecanoyl-CoA + H(+) = 3-oxosphinganine + CO2 + CoA. The catalysed reaction is octadecanoyl-CoA + L-serine + H(+) = 3-oxoeicosasphinganine + CO2 + CoA. It carries out the reaction tetradecanoyl-CoA + L-serine + H(+) = 3-oxohexadecasphinganine + CO2 + CoA. It catalyses the reaction dodecanoyl-CoA + L-serine + H(+) = 3-oxotetradecasphinganine + CO2 + CoA. It functions in the pathway lipid metabolism; sphingolipid metabolism. With respect to regulation, SPT complex catalytic activity is negatively regulated by ORMDL proteins, including ORMDL3, in the presence of ceramides. This mechanism allows to maintain ceramide levels at sufficient concentrations for the production of complex sphingolipids, but which prevents the accumulation of ceramides to levels that trigger apoptosis. In terms of biological role, component of the serine palmitoyltransferase multisubunit enzyme (SPT) that catalyzes the initial and rate-limiting step in sphingolipid biosynthesis by condensing L-serine and activated acyl-CoA (most commonly palmitoyl-CoA) to form long-chain bases. The SPT complex is also composed of SPTLC2 or SPTLC3 and SPTSSA or SPTSSB. Within this complex, the heterodimer with SPTLC2 or SPTLC3 forms the catalytic core. The composition of the serine palmitoyltransferase (SPT) complex determines the substrate preference. The SPTLC1-SPTLC2-SPTSSA complex shows a strong preference for C16-CoA substrate, while the SPTLC1-SPTLC3-SPTSSA isozyme uses both C14-CoA and C16-CoA as substrates, with a slight preference for C14-CoA. The SPTLC1-SPTLC2-SPTSSB complex shows a strong preference for C18-CoA substrate, while the SPTLC1-SPTLC3-SPTSSB isozyme displays an ability to use a broader range of acyl-CoAs, without apparent preference. Required for adipocyte cell viability and metabolic homeostasis. The sequence is that of Serine palmitoyltransferase 1 (SPTLC1) from Homo sapiens (Human).